Here is a 392-residue protein sequence, read N- to C-terminus: Queuine tRNA-ribosyltransferase (392 aa).

Aspartate 93 (proton acceptor) is an active-site residue. Residues 93 to 97 (DSGGY), aspartate 147, glutamine 189, and glycine 216 contribute to the substrate site. Residues 247–253 (GVGAPED) are RNA binding. The Nucleophile role is filled by aspartate 266. The RNA binding; important for wobble base 34 recognition stretch occupies residues 271-275 (TRVAR). 4 residues coordinate Zn(2+): cysteine 304, cysteine 306, cysteine 309, and histidine 335.

This sequence belongs to the queuine tRNA-ribosyltransferase family. In terms of assembly, homodimer. Within each dimer, one monomer is responsible for RNA recognition and catalysis, while the other monomer binds to the replacement base PreQ1. Requires Zn(2+) as cofactor.

It catalyses the reaction 7-aminomethyl-7-carbaguanine + guanosine(34) in tRNA = 7-aminomethyl-7-carbaguanosine(34) in tRNA + guanine. The protein operates within tRNA modification; tRNA-queuosine biosynthesis. Its function is as follows. Catalyzes the base-exchange of a guanine (G) residue with the queuine precursor 7-aminomethyl-7-deazaguanine (PreQ1) at position 34 (anticodon wobble position) in tRNAs with GU(N) anticodons (tRNA-Asp, -Asn, -His and -Tyr). Catalysis occurs through a double-displacement mechanism. The nucleophile active site attacks the C1' of nucleotide 34 to detach the guanine base from the RNA, forming a covalent enzyme-RNA intermediate. The proton acceptor active site deprotonates the incoming PreQ1, allowing a nucleophilic attack on the C1' of the ribose to form the product. After dissociation, two additional enzymatic reactions on the tRNA convert PreQ1 to queuine (Q), resulting in the hypermodified nucleoside queuosine (7-(((4,5-cis-dihydroxy-2-cyclopenten-1-yl)amino)methyl)-7-deazaguanosine). The polypeptide is Queuine tRNA-ribosyltransferase (Dehalococcoides mccartyi (strain CBDB1)).